Reading from the N-terminus, the 545-residue chain is Chaperonin GroEL 3 (545 aa).

Residues 30–33, K51, 87–91, G415, and D496 contribute to the ATP site; these read TLGP and DGTTT.

This sequence belongs to the chaperonin (HSP60) family. As to quaternary structure, forms a cylinder of 14 subunits composed of two heptameric rings stacked back-to-back. Interacts with the co-chaperonin GroES.

It localises to the cytoplasm. It catalyses the reaction ATP + H2O + a folded polypeptide = ADP + phosphate + an unfolded polypeptide.. Functionally, together with its co-chaperonin GroES, plays an essential role in assisting protein folding. The GroEL-GroES system forms a nano-cage that allows encapsulation of the non-native substrate proteins and provides a physical environment optimized to promote and accelerate protein folding. The protein is Chaperonin GroEL 3 of Nitrobacter hamburgensis (strain DSM 10229 / NCIMB 13809 / X14).